The primary structure comprises 392 residues: Galactose-1-phosphate uridylyltransferase (392 aa).

Zn(2+) contacts are provided by cysteine 52 and cysteine 55. Residues alanine 61 and 77-78 (ND) contribute to the UDP-alpha-D-glucose site. Histidine 126 is a Zn(2+) binding site. Asparagine 194 serves as a coordination point for UDP-alpha-D-glucose. Zn(2+) is bound at residue histidine 205. Residue histidine 207 is the Tele-UMP-histidine intermediate of the active site. A UDP-alpha-D-glucose-binding site is contributed by glutamine 209. Fe cation-binding residues include glutamate 223, histidine 323, histidine 340, and histidine 342. UDP-alpha-D-glucose contacts are provided by residues 355 to 358 (KFLV) and 360 to 361 (YE).

This sequence belongs to the galactose-1-phosphate uridylyltransferase type 1 family. As to quaternary structure, homodimer. The cofactor is Zn(2+).

It carries out the reaction alpha-D-galactose 1-phosphate + UDP-alpha-D-glucose = alpha-D-glucose 1-phosphate + UDP-alpha-D-galactose. It participates in carbohydrate metabolism; galactose metabolism. This is Galactose-1-phosphate uridylyltransferase (gal-7) from Neurospora crassa (strain ATCC 24698 / 74-OR23-1A / CBS 708.71 / DSM 1257 / FGSC 987).